The primary structure comprises 201 residues: Protein ripply1 (201 aa).

Positions 1-29 (MDPAASPAAAPPAAPAAAPAADPAADPAA) are disordered. Residues 15-29 (PAAAPAADPAADPAA) are compositionally biased toward low complexity. The short motif at 57-60 (AYLW) is the WRPW motif element. The segment at 99–134 (HPVRLYWPKSHSFDYLYSAGEILLNNFPVQATINLY) is ripply homology domain. The segment covering 136 to 174 (DSDSADNEEDKEEEEEEEEEEDDEEEEEDEDKDVNENEP) has biased composition (acidic residues). Residues 136–201 (DSDSADNEED…SPDPHSACPN (66 aa)) are disordered.

This sequence belongs to the ripply family. In terms of tissue distribution, expressed in the anterior presomitic mesoderm and somites of stage E9.5 dpc embryos. Also expressed in tongue, diaphragm and intercostal muscles at 16.5 dpc.

Its subcellular location is the nucleus. Plays a role in somitogenesis. Essential for transcriptional repression of the segmental patterning genes, thus terminating the segmentation program in the presomitic mesoderm, and also required for the maintenance of rostrocaudal polarity in somites. This Mus musculus (Mouse) protein is Protein ripply1.